The chain runs to 255 residues: Hydroxyacylglutathione hydrolase (255 aa).

H55, H57, D59, H60, H113, D132, and H170 together coordinate Zn(2+).

Belongs to the metallo-beta-lactamase superfamily. Glyoxalase II family. In terms of assembly, monomer. Requires Zn(2+) as cofactor.

It carries out the reaction an S-(2-hydroxyacyl)glutathione + H2O = a 2-hydroxy carboxylate + glutathione + H(+). Its pathway is secondary metabolite metabolism; methylglyoxal degradation; (R)-lactate from methylglyoxal: step 2/2. Thiolesterase that catalyzes the hydrolysis of S-D-lactoyl-glutathione to form glutathione and D-lactic acid. This is Hydroxyacylglutathione hydrolase from Methylobacterium nodulans (strain LMG 21967 / CNCM I-2342 / ORS 2060).